Here is a 464-residue protein sequence, read N- to C-terminus: Molybdate transporter 2 (464 aa).

A Tonoplast targeting signal motif is present at residues 8 to 9; sequence LL. 9 consecutive transmembrane segments (helical) span residues 33-53, 62-82, 116-136, 172-192, 223-243, 309-329, 348-368, 374-394, and 404-424; these read LSGA…LTLV, LIFT…PMPV, LLLG…LPVV, IWLG…IILS, LLSS…LCFI, VSIS…MPVC, SVIF…NSFV, FPIG…AMAS, and FIML…LGFG.

This sequence belongs to the SLC26A/SulP transporter (TC 2.A.53) family. In terms of tissue distribution, expressed in leaves. Not detected in roots, shoots and seeds.

It is found in the vacuole membrane. Its function is as follows. Molybdate transporter required for vacuolar molybdate export during senescence. The polypeptide is Molybdate transporter 2 (MOT2) (Arabidopsis thaliana (Mouse-ear cress)).